We begin with the raw amino-acid sequence, 348 residues long: Phosphate acyltransferase (348 aa).

Belongs to the PlsX family. Homodimer. Probably interacts with PlsY.

The protein resides in the cytoplasm. It catalyses the reaction a fatty acyl-[ACP] + phosphate = an acyl phosphate + holo-[ACP]. Its pathway is lipid metabolism; phospholipid metabolism. Functionally, catalyzes the reversible formation of acyl-phosphate (acyl-PO(4)) from acyl-[acyl-carrier-protein] (acyl-ACP). This enzyme utilizes acyl-ACP as fatty acyl donor, but not acyl-CoA. The protein is Phosphate acyltransferase of Francisella philomiragia subsp. philomiragia (strain ATCC 25017 / CCUG 19701 / FSC 153 / O#319-036).